A 314-amino-acid chain; its full sequence is Nitrilase 2 (314 aa).

Residues 7–269 enclose the CN hydrolase domain; that stretch reads VTLGVAQAAP…ETLITARVST (263 aa). Catalysis depends on Glu-47, which acts as the Proton acceptor. The active-site Proton donor is Lys-132. Cys-166 acts as the Nucleophile in catalysis.

This sequence belongs to the carbon-nitrogen hydrolase superfamily. Nitrilase family.

The catalysed reaction is a nitrile + 2 H2O = a carboxylate + NH4(+). In terms of biological role, nitrilases catalyze the mild hydrolytic conversion of organonitriles directly to the corresponding carboxylic acids. Catalyzes the production of aryllactic acid derivatives. Mediates the hydrolysis of cyanohydrin to (S)-phenyllactic acid. The chain is Nitrilase 2 from Unknown prokaryotic organism.